The primary structure comprises 327 residues: Beta-ketoacyl-[acyl-carrier-protein] synthase III 2 (327 aa).

Active-site residues include Cys114 and His251. Positions 252–256 (SANLR) are ACP-binding. Residue Asn281 is part of the active site.

The protein belongs to the thiolase-like superfamily. FabH family. Homodimer.

It is found in the cytoplasm. It catalyses the reaction malonyl-[ACP] + acetyl-CoA + H(+) = 3-oxobutanoyl-[ACP] + CO2 + CoA. It functions in the pathway lipid metabolism; fatty acid biosynthesis. In terms of biological role, catalyzes the condensation reaction of fatty acid synthesis by the addition to an acyl acceptor of two carbons from malonyl-ACP. Catalyzes the first condensation reaction which initiates fatty acid synthesis and may therefore play a role in governing the total rate of fatty acid production. Possesses both acetoacetyl-ACP synthase and acetyl transacylase activities. Its substrate specificity determines the biosynthesis of branched-chain and/or straight-chain of fatty acids. The chain is Beta-ketoacyl-[acyl-carrier-protein] synthase III 2 from Bacillus cereus (strain ATCC 14579 / DSM 31 / CCUG 7414 / JCM 2152 / NBRC 15305 / NCIMB 9373 / NCTC 2599 / NRRL B-3711).